Consider the following 1007-residue polypeptide: Zinc finger CCCH domain-containing protein 4 (1007 aa).

Residues 28-192 form the Helicase ATP-binding domain; the sequence is VEKVKGNRVT…FRDLGRGERV (165 aa). 41–48 contacts ATP; that stretch reads GDTGCGKS. The DEAH box signature appears at 139–142; it reads DEIH. Residues 250–420 form the Helicase C-terminal domain; that stretch reads LIHRLLLHIH…EQVLMICCAE (171 aa). 2 C3H1-type zinc fingers span residues 723 to 750 and 751 to 778; these read ALEN…HSSR and APRP…HDSG.

The sequence is that of Zinc finger CCCH domain-containing protein 4 from Oryza sativa subsp. japonica (Rice).